A 299-amino-acid chain; its full sequence is HTH-type transcriptional regulator PgrR (299 aa).

The HTH lysR-type domain occupies 4 to 61 (EEIADLMAFVVVAEERSFTRAAARLSMAQSALSQIVRRIEERLGLRLLTRTTRSVVPT). A DNA-binding region (H-T-H motif) is located at residues 21 to 40 (FTRAAARLSMAQSALSQIVR).

The protein belongs to the LysR transcriptional regulatory family.

In terms of biological role, regulates the expression of genes involved in peptidoglycan (PG) degradation. Could play a role in switch control between recycling and degradation of PG peptides. Negatively regulates the expression of the ycjY-ymjD-ymjC-mpaA operon by binding to the PgrR-box. In addition, other genes are predicted to be under the control of PgrR, including genes related to membrane formation and function. In Escherichia coli (strain K12), this protein is HTH-type transcriptional regulator PgrR (pgrR).